The primary structure comprises 93 residues: Small ribosomal subunit protein uS19c (93 aa).

The protein belongs to the universal ribosomal protein uS19 family.

The protein localises to the plastid. It is found in the chloroplast. Functionally, protein S19 forms a complex with S13 that binds strongly to the 16S ribosomal RNA. This chain is Small ribosomal subunit protein uS19c, found in Lolium perenne (Perennial ryegrass).